The chain runs to 214 residues: uncharacterized protein (214 aa).

Positions 39-68 (KLRSKKEVEEKIKEVDRELEEVVNAGVSIN) form a coiled coil. Basic and acidic residues predominate over residues 99–114 (EIKVEAPEPDEEKLPD). The interval 99–162 (EIKVEAPEPD…EEVEFDEEDD (64 aa)) is disordered. A compositionally biased stretch (acidic residues) spans 123-162 (SDLDMDFEDLGQEIPLDADEQEEEEEEEEVEEVEFDEEDD). The stretch at 138–212 (LDADEQEEEE…IQRLKVLSGG (75 aa)) forms a coiled coil.

This is an uncharacterized protein from Archaeoglobus fulgidus (strain ATCC 49558 / DSM 4304 / JCM 9628 / NBRC 100126 / VC-16).